The chain runs to 859 residues: Protein translocase subunit SecA (859 aa).

Residues glutamine 88, 106 to 110 (GEGKT), and aspartate 496 contribute to the ATP site. The disordered stretch occupies residues 818–838 (FSHQPQSEVKVSRNDPCPCGS). Positions 834, 836, 845, and 846 each coordinate Zn(2+).

The protein belongs to the SecA family. As to quaternary structure, monomer and homodimer. Part of the essential Sec protein translocation apparatus which comprises SecA, SecYEG and auxiliary proteins SecDF-YajC and YidC. Zn(2+) is required as a cofactor.

It is found in the cell inner membrane. The protein resides in the cytoplasm. It carries out the reaction ATP + H2O + cellular proteinSide 1 = ADP + phosphate + cellular proteinSide 2.. Its function is as follows. Part of the Sec protein translocase complex. Interacts with the SecYEG preprotein conducting channel. Has a central role in coupling the hydrolysis of ATP to the transfer of proteins into and across the cell membrane, serving as an ATP-driven molecular motor driving the stepwise translocation of polypeptide chains across the membrane. This is Protein translocase subunit SecA from Wolinella succinogenes (strain ATCC 29543 / DSM 1740 / CCUG 13145 / JCM 31913 / LMG 7466 / NCTC 11488 / FDC 602W) (Vibrio succinogenes).